The primary structure comprises 386 residues: S-adenosylmethionine:tRNA ribosyltransferase-isomerase (386 aa).

It belongs to the QueA family. In terms of assembly, monomer.

Its subcellular location is the cytoplasm. The catalysed reaction is 7-aminomethyl-7-carbaguanosine(34) in tRNA + S-adenosyl-L-methionine = epoxyqueuosine(34) in tRNA + adenine + L-methionine + 2 H(+). The protein operates within tRNA modification; tRNA-queuosine biosynthesis. Functionally, transfers and isomerizes the ribose moiety from AdoMet to the 7-aminomethyl group of 7-deazaguanine (preQ1-tRNA) to give epoxyqueuosine (oQ-tRNA). In Rickettsia canadensis (strain McKiel), this protein is S-adenosylmethionine:tRNA ribosyltransferase-isomerase.